Consider the following 283-residue polypeptide: Aquaporin PIP2-5 (283 aa).

A run of 2 helical transmembrane segments spans residues 37–57 and 74–94; these read AVIAEFVATLLFLYVTVATVI and CGGVGVLGIAWAFGGMIFILV. Residues 106 to 108 carry the NPA 1 motif; sequence NPA. The next 3 membrane-spanning stretches (helical) occupy residues 125–145, 167–187, and 199–219; these read ILYIVAQCLGAVCGVALVKGF, GTGLAAEIIGTFVLVYTVFSA, and VPVLAPLPIGFAVFMVHLATI. Positions 227 to 229 match the NPA 2 motif; sequence NPA. A helical transmembrane segment spans residues 249 to 269; sequence IFWVGPFIGAAIAALYHQIVL.

Belongs to the MIP/aquaporin (TC 1.A.8) family. PIP (TC 1.A.8.11) subfamily. Expressed in roots.

The protein resides in the cell membrane. Its function is as follows. Water channel required to facilitate the transport of water across cell membrane. May play a role in root water uptake. This Oryza sativa subsp. japonica (Rice) protein is Aquaporin PIP2-5 (PIP2-5).